The chain runs to 206 residues: 2,3-bisphosphoglycerate-dependent phosphoglycerate mutase (206 aa).

Substrate-binding positions include 9 to 16 (RHGQSEWN), 22 to 23 (TG), Arg-61, 88 to 91 (ERDY), Lys-99, 115 to 116 (RR), and 159 to 160 (GN). His-10 acts as the Tele-phosphohistidine intermediate in catalysis. Glu-88 serves as the catalytic Proton donor/acceptor.

This sequence belongs to the phosphoglycerate mutase family. BPG-dependent PGAM subfamily. In terms of assembly, homodimer.

The enzyme catalyses (2R)-2-phosphoglycerate = (2R)-3-phosphoglycerate. It functions in the pathway carbohydrate degradation; glycolysis; pyruvate from D-glyceraldehyde 3-phosphate: step 3/5. Its function is as follows. Catalyzes the interconversion of 2-phosphoglycerate and 3-phosphoglycerate. The chain is 2,3-bisphosphoglycerate-dependent phosphoglycerate mutase from Azorhizobium caulinodans (strain ATCC 43989 / DSM 5975 / JCM 20966 / LMG 6465 / NBRC 14845 / NCIMB 13405 / ORS 571).